Consider the following 464-residue polypeptide: Chromosomal replication initiator protein DnaA (464 aa).

A domain I, interacts with DnaA modulators region spans residues 1 to 90 (MNNDNTEVLE…KYWQDEDQSI (90 aa)). The segment at 90–126 (ICSVDICVVSNQDPNLLVDIKDRVDRGIKGNCDNVSS) is domain II. The domain III, AAA+ region stretch occupies residues 127-345 (PLDPRFTFDN…GALNKVVAHS (219 aa)). ATP contacts are provided by glycine 173, glycine 175, lysine 176, and threonine 177. Residues 346–464 (SLVGCSITLD…DINLLNRMLR (119 aa)) form a domain IV, binds dsDNA region.

Belongs to the DnaA family. As to quaternary structure, oligomerizes as a right-handed, spiral filament on DNA at oriC.

Its subcellular location is the cytoplasm. Plays an essential role in the initiation and regulation of chromosomal replication. ATP-DnaA binds to the origin of replication (oriC) to initiate formation of the DNA replication initiation complex once per cell cycle. Binds the DnaA box (a 9 base pair repeat at the origin) and separates the double-stranded (ds)DNA. Forms a right-handed helical filament on oriC DNA; dsDNA binds to the exterior of the filament while single-stranded (ss)DNA is stabiized in the filament's interior. The ATP-DnaA-oriC complex binds and stabilizes one strand of the AT-rich DNA unwinding element (DUE), permitting loading of DNA polymerase. After initiation quickly degrades to an ADP-DnaA complex that is not apt for DNA replication. Binds acidic phospholipids. This chain is Chromosomal replication initiator protein DnaA, found in Ehrlichia ruminantium (strain Gardel).